A 284-amino-acid chain; its full sequence is MDGIKKKMIAMKLEKENAMERAVQYEELLKKKEEEREKRESEIAELNNKMKQAQIDCDEAQETLQEQMNKLEETDKRATNAEAEVAAMTRRIRLLEEDLEVSSSRLTETLTKLEEASKTAEESERGRKDLEIRSIADDERLNQLEDQQKEAKYIAEDADRKYDEAARKLAIAEVDFERAEARLEAAESKIVELEEELRVVGNNMKALEISEQESAQREESYEETIRDLTERLKAAEQRATEAERQVSKLQNEVDHLEDDLLAEKERYKALSGELDQTFAELTGY.

The stretch at 1 to 284 forms a coiled coil; the sequence is MDGIKKKMIA…DQTFAELTGY (284 aa). The interval 111–131 is disordered; the sequence is TKLEEASKTAEESERGRKDLE.

Belongs to the tropomyosin family. In terms of assembly, homodimer.

In terms of biological role, tropomyosin, in association with the troponin complex, plays a central role in the calcium dependent regulation of muscle contraction. This Schistosoma mansoni (Blood fluke) protein is Tropomyosin-1.